The following is a 395-amino-acid chain: Altered inheritance of mitochondria protein 39, mitochondrial (395 aa).

Residues 156-176 (QIWSAIFGGIFGVILGYSLIY) traverse the membrane as a helical segment.

It belongs to the AIM39 family.

The protein resides in the mitochondrion membrane. The sequence is that of Altered inheritance of mitochondria protein 39, mitochondrial (AIM39) from Saccharomyces cerevisiae (strain ATCC 204508 / S288c) (Baker's yeast).